The following is a 552-amino-acid chain: Outer dynein arm protein 1 (552 aa).

The interval 1–27 (MPSADATRGGGSAGSMGKGTLGAGDTL) is disordered. Gly residues predominate over residues 8-22 (RGGGSAGSMGKGTLG). Coiled coils occupy residues 28 to 59 (GHKS…LENK), 120 to 260 (SAKE…QELL), and 331 to 395 (TLFN…YEKR). Disordered regions lie at residues 482–515 (NRII…TREH) and 528–552 (LETA…PTRR). Over residues 493 to 506 (QEEEVEGLEPEPVE) the composition is skewed to acidic residues.

The protein belongs to the ODA1/DCC2 family. Component of the outer dynein arm complex.

Its subcellular location is the cytoplasm. The protein resides in the cytoskeleton. It localises to the cilium axoneme. Component of the outer dynein arm complex required for assembly of the outer dynein arm-docking complex (ODA-DC) and the outer dynein arm onto the doublet microtubule. This chain is Outer dynein arm protein 1 (ODA1), found in Chlamydomonas reinhardtii (Chlamydomonas smithii).